The primary structure comprises 415 residues: tRNA(Ile2) 2-agmatinylcytidine synthetase TiaS (415 aa).

This sequence belongs to the TiaS family.

It is found in the cytoplasm. It carries out the reaction cytidine(34) in tRNA(Ile2) + agmatine + ATP + H2O = 2-agmatinylcytidine(34) in tRNA(Ile2) + AMP + 2 phosphate + 2 H(+). Functionally, ATP-dependent agmatine transferase that catalyzes the formation of 2-agmatinylcytidine (agm2C) at the wobble position (C34) of tRNA(Ile2), converting the codon specificity from AUG to AUA. In Methanocorpusculum labreanum (strain ATCC 43576 / DSM 4855 / Z), this protein is tRNA(Ile2) 2-agmatinylcytidine synthetase TiaS.